Consider the following 274-residue polypeptide: Diaminopimelate epimerase (274 aa).

Residues asparagine 11 and asparagine 60 each contribute to the substrate site. The active-site Proton donor is the cysteine 69. Substrate is bound by residues 70-71 (GN), asparagine 191, and 209-210 (ER). The active-site Proton acceptor is cysteine 218. Position 219–220 (219–220 (GS)) interacts with substrate.

The protein belongs to the diaminopimelate epimerase family. In terms of assembly, homodimer.

Its subcellular location is the cytoplasm. The enzyme catalyses (2S,6S)-2,6-diaminopimelate = meso-2,6-diaminopimelate. The protein operates within amino-acid biosynthesis; L-lysine biosynthesis via DAP pathway; DL-2,6-diaminopimelate from LL-2,6-diaminopimelate: step 1/1. Its function is as follows. Catalyzes the stereoinversion of LL-2,6-diaminopimelate (L,L-DAP) to meso-diaminopimelate (meso-DAP), a precursor of L-lysine and an essential component of the bacterial peptidoglycan. In Caldanaerobacter subterraneus subsp. tengcongensis (strain DSM 15242 / JCM 11007 / NBRC 100824 / MB4) (Thermoanaerobacter tengcongensis), this protein is Diaminopimelate epimerase.